Consider the following 416-residue polypeptide: UDP-N-acetylglucosamine 1-carboxyvinyltransferase (416 aa).

22-23 contributes to the phosphoenolpyruvate binding site; that stretch reads KN. Arg92 lines the UDP-N-acetyl-alpha-D-glucosamine pocket. Cys116 (proton donor) is an active-site residue. Cys116 is modified (2-(S-cysteinyl)pyruvic acid O-phosphothioketal). UDP-N-acetyl-alpha-D-glucosamine contacts are provided by residues 121–125, Asp304, and Ile326; that span reads RPVDQ.

This sequence belongs to the EPSP synthase family. MurA subfamily.

The protein localises to the cytoplasm. It carries out the reaction phosphoenolpyruvate + UDP-N-acetyl-alpha-D-glucosamine = UDP-N-acetyl-3-O-(1-carboxyvinyl)-alpha-D-glucosamine + phosphate. It functions in the pathway cell wall biogenesis; peptidoglycan biosynthesis. In terms of biological role, cell wall formation. Adds enolpyruvyl to UDP-N-acetylglucosamine. The protein is UDP-N-acetylglucosamine 1-carboxyvinyltransferase of Cupriavidus metallidurans (strain ATCC 43123 / DSM 2839 / NBRC 102507 / CH34) (Ralstonia metallidurans).